We begin with the raw amino-acid sequence, 375 residues long: D-apiose dehydrogenase (375 aa).

29–30 provides a ligand contact to NAD(+); that stretch reads FF. Mg(2+)-binding residues include tryptophan 38, arginine 39, isoleucine 41, and alanine 44. NAD(+) is bound by residues aspartate 51, serine 93, 111 to 112, asparagine 140, and 179 to 181; these read QK and QPY. A substrate-binding site is contributed by lysine 112. Glutamine 179, aspartate 192, histidine 196, and tyrosine 246 together coordinate substrate.

The protein belongs to the Gfo/Idh/MocA family.

It carries out the reaction D-apiofuranose + NAD(+) = D-apionolactone + NADH + H(+). It functions in the pathway carbohydrate metabolism. Its function is as follows. Involved in catabolism of D-apiose. Catalyzes oxidation of D-apiose to D-apionolactone. In Paraburkholderia graminis (strain ATCC 700544 / DSM 17151 / LMG 18924 / NCIMB 13744 / C4D1M), this protein is D-apiose dehydrogenase.